We begin with the raw amino-acid sequence, 92 residues long: Small ribosomal subunit protein uS19 (92 aa).

Residues 73–92 (EFSPTRSFRGHAGAKNKGRK) are disordered. The segment covering 80 to 92 (FRGHAGAKNKGRK) has biased composition (basic residues).

This sequence belongs to the universal ribosomal protein uS19 family.

Its function is as follows. Protein S19 forms a complex with S13 that binds strongly to the 16S ribosomal RNA. The chain is Small ribosomal subunit protein uS19 from Christiangramia forsetii (strain DSM 17595 / CGMCC 1.15422 / KT0803) (Gramella forsetii).